The sequence spans 207 residues: Large ribosomal subunit protein uL4 (207 aa).

A disordered region spans residues 45-78; the sequence is RQGTHAVKNRSAVRGGGRKPWRQKGTGRARQGSI. The span at 60–71 shows a compositional bias: basic residues; sequence GGRKPWRQKGTG.

It belongs to the universal ribosomal protein uL4 family. As to quaternary structure, part of the 50S ribosomal subunit.

Its function is as follows. One of the primary rRNA binding proteins, this protein initially binds near the 5'-end of the 23S rRNA. It is important during the early stages of 50S assembly. It makes multiple contacts with different domains of the 23S rRNA in the assembled 50S subunit and ribosome. Forms part of the polypeptide exit tunnel. In Pediococcus pentosaceus (strain ATCC 25745 / CCUG 21536 / LMG 10740 / 183-1w), this protein is Large ribosomal subunit protein uL4.